The primary structure comprises 775 residues: MASLIYRQLLTNSYSVDLHDEIEQIGSEKTQNVTINPSPFAQTRYAPVNWGHGEINDSTTVEPILDGPYQPTTFTPPNDYWILINSNTNGVVYESTNNSDFWTAVVAIEPHVNPVDRQYTIFGESKQFNVSNDSNKWKFLEMFRSSSQNEFYNRRTLTSDTRFVGILKYGGRVWTFHGETPRATTDSSSTANLNNISITIHSEFYIIPRSQESKCNEYINNGLPPIQNTRNVVPLPLSSRSIQYKRAQVNEDIIVSKTSLWKEMQYNRDIIIRFKFGNSIVKMGGLGYKWSEISYKAANYQYNYLRDGEQVTAHTTCSVNGVNNFSYNGGSLPTDFGISRYEVIKENSYVYVDYWDDSKAFRNMVYVRSLAANLNSVKCTGGSYNFSIPVGAWPVMNGGAVSLHFAGVTLSTQFTDFVSLNSLRFRFSLTVDEPPFSILRTRTVNLYGLPAANPNNGNEYYEISGRFSLIYLVPTNDDYQTPIMNSVTVRQDLERQLTDLREEFNSLSQEIAMAQLIDLALLPLDMFSMFSGIKSTIDLTKSMATSVMKKFRKSKLATSISEMTNSLSDAASSASRNVSIRSNLSAISNWTNVSNDVSNVTNSLNDISTQTSTISKKFRLKEMITQTEGMSFDDISAAVLKTKIDMSTQIGKNTLPDIVTEASEKFIPKRSYRILKDDEVMEINTEGKFFAYKINTFDEVPFDVNKFAELVTDSPVISAIIDFKTLKNLNDNYGITRTEALNLIKSNPNMLRNFINQNNPIIRNRIEQLILQCKL.

A spike head region spans residues 65 to 223; sequence LDGPYQPTTF…KCNEYINNGL (159 aa). Positions 247 to 478 are spike body and stalk (antigen domain); sequence AQVNEDIIVS…LIYLVPTNDD (232 aa). The tract at residues 247–479 is antigen domain; sequence AQVNEDIIVS…IYLVPTNDDY (233 aa). The segment at 307–309 is DGE motif; interaction with ITGA2/ITGB1 heterodimer; sequence DGE. The DGE motif; interaction with ITGA2/ITGB1 heterodimer signature appears at 307 to 309; sequence DGE. The cysteines at positions 317 and 379 are disulfide-linked. Residues 388–408 are hydrophobic; possible role in virus entry into host cell; the sequence is IPVGAWPVMNGGAVSLHFAGV. The YGL motif; interaction with ITGA4 motif lies at 447–449; the sequence is YGL. The stretch at 483 to 517 forms a coiled coil; it reads IMNSVTVRQDLERQLTDLREEFNSLSQEIAMAQLI. Residues 509–775 form a spike foot region; it reads QEIAMAQLID…IEQLILQCKL (267 aa). The short motif at 643-645 is the KID motif; interaction with HSPA8 element; sequence KID.

The protein belongs to the rotavirus VP4 family. As to quaternary structure, homotrimer. VP4 adopts a dimeric appearance above the capsid surface, while forming a trimeric base anchored inside the capsid layer. Only hints of the third molecule are observed above the capsid surface. It probably performs a series of molecular rearrangements during viral entry. Prior to trypsin cleavage, it is flexible. The priming trypsin cleavage triggers its rearrangement into rigid spikes with approximate two-fold symmetry of their protruding parts. After an unknown second triggering event, cleaved VP4 may undergo another rearrangement, in which two VP5* subunits fold back on themselves and join a third subunit to form a tightly associated trimer, shaped like a folded umbrella. Interacts with VP6. Interacts with VP7. In terms of assembly, homotrimer. The trimer is coiled-coil stabilized by its C-terminus, however, its N-terminus, known as antigen domain or 'body', seems to be flexible allowing it to self-associate either as a dimer or a trimer. Interacts with host ITGA2 (via ITAG2 I-domain); this interaction occurs when ITGA2 is part of the integrin heterodimer ITGA2/ITGB1. Interacts with host integrin heterodimer ITGA4/ITGB1 and ITGA4/ITGB7. Proteolytic cleavage by trypsin results in activation of VP4 functions and greatly increases infectivity. The penetration into the host cell is dependent on trypsin treatment of VP4. It produces two peptides, VP5* and VP8* that remain associated with the virion. Cleavage of VP4 by trypsin probably occurs in vivo in the lumen of the intestine prior to infection of enterocytes. Trypsin seems to be incorporated into the three-layered viral particles but remains inactive as long as the viral outer capsid is intact and would only be activated upon the solubilization of the latter.

The protein localises to the virion. The protein resides in the host rough endoplasmic reticulum. It localises to the host cell membrane. It is found in the host cytoplasm. Its subcellular location is the host cytoskeleton. The protein localises to the host endoplasmic reticulum-Golgi intermediate compartment. Spike-forming protein that mediates virion attachment to the host epithelial cell receptors and plays a major role in cell penetration, determination of host range restriction and virulence. Rotavirus attachment and entry into the host cell probably involves multiple sequential contacts between the outer capsid proteins VP4 and VP7, and the cell receptors. It is subsequently lost, together with VP7, following virus entry into the host cell. Following entry into the host cell, low intracellular or intravesicular Ca(2+) concentration probably causes the calcium-stabilized VP7 trimers to dissociate from the virion. This step is probably necessary for the membrane-disrupting entry step and the release of VP4, which is locked onto the virion by VP7. During the virus exit from the host cell, VP4 seems to be required to target the newly formed virions to the host cell lipid rafts. Functionally, forms the spike 'foot' and 'body' and acts as a membrane permeabilization protein that mediates release of viral particles from endosomal compartments into the cytoplasm. During entry, the part of VP5* that protrudes from the virus folds back on itself and reorganizes from a local dimer to a trimer. This reorganization may be linked to membrane penetration by exposing VP5* hydrophobic region. In integrin-dependent strains, VP5* targets the integrin heterodimer ITGA2/ITGB1 for cell attachment. Its function is as follows. VP8* Forms the head of the spikes and mediates the recognition of specific host cell surface glycans. It is the viral hemagglutinin and an important target of neutralizing antibodies. In sialic acid-dependent strains, VP8* binds to host cell sialic acid, most probably a ganglioside, providing the initial contact. In some other strains, VP8* mediates the attachment to histo-blood group antigens (HBGAs) for viral entry. This is Outer capsid protein VP4 from Rotavirus A (strain RVA/Human/United States/Wa/1974/G1P1A[8]) (RV-A).